Consider the following 232-residue polypeptide: uncharacterized protein (232 aa).

The N-terminal stretch at 1–32 (MTTSKIATAFKTATFALAAGAVALGLASPADA) is a signal peptide.

This is an uncharacterized protein from Mycobacterium bovis (strain ATCC BAA-935 / AF2122/97).